Here is a 92-residue protein sequence, read N- to C-terminus: Protein canopy homolog 1 (92 aa).

It belongs to the canopy family.

This is Protein canopy homolog 1 (CNPY1) from Homo sapiens (Human).